A 621-amino-acid chain; its full sequence is 1-deoxy-D-xylulose-5-phosphate synthase (621 aa).

Residues H80 and 121–123 (GHS) each bind thiamine diphosphate. Residue D152 participates in Mg(2+) binding. Residues 153–154 (GA), N181, Y288, and E370 each bind thiamine diphosphate. N181 serves as a coordination point for Mg(2+).

It belongs to the transketolase family. DXPS subfamily. Homodimer. The cofactor is Mg(2+). Requires thiamine diphosphate as cofactor.

It carries out the reaction D-glyceraldehyde 3-phosphate + pyruvate + H(+) = 1-deoxy-D-xylulose 5-phosphate + CO2. It participates in metabolic intermediate biosynthesis; 1-deoxy-D-xylulose 5-phosphate biosynthesis; 1-deoxy-D-xylulose 5-phosphate from D-glyceraldehyde 3-phosphate and pyruvate: step 1/1. Catalyzes the acyloin condensation reaction between C atoms 2 and 3 of pyruvate and glyceraldehyde 3-phosphate to yield 1-deoxy-D-xylulose-5-phosphate (DXP). The chain is 1-deoxy-D-xylulose-5-phosphate synthase from Shewanella sediminis (strain HAW-EB3).